Reading from the N-terminus, the 129-residue chain is Lysozyme C (129 aa).

The 129-residue stretch at 1-129 (KVFSKCELAH…LSEYLASCNL (129 aa)) folds into the C-type lysozyme domain. Disulfide bonds link C6–C127, C30–C115, C65–C80, and C76–C94. Catalysis depends on residues E35 and D53. K82, D85, N87, D90, and D91 together coordinate Ca(2+).

It belongs to the glycosyl hydrolase 22 family. As to quaternary structure, monomer. Ca(2+) is required as a cofactor.

The enzyme catalyses Hydrolysis of (1-&gt;4)-beta-linkages between N-acetylmuramic acid and N-acetyl-D-glucosamine residues in a peptidoglycan and between N-acetyl-D-glucosamine residues in chitodextrins.. In terms of biological role, lysozymes have primarily a bacteriolytic function; those in tissues and body fluids are associated with the monocyte-macrophage system and enhance the activity of immunoagents. The chain is Lysozyme C (LYZ) from Equus asinus (Donkey).